The sequence spans 479 residues: Ribulose bisphosphate carboxylase large chain 2 (479 aa).

2 residues coordinate substrate: N116 and T166. Residue K168 is the Proton acceptor of the active site. Residue K170 participates in substrate binding. K194, D196, and E197 together coordinate Mg(2+). K194 carries the N6-carboxylysine modification. The Proton acceptor role is filled by H287. Substrate contacts are provided by R288, H320, and S372.

Belongs to the RuBisCO large chain family. Type I subfamily. As to quaternary structure, heterohexadecamer of 8 large chains and 8 small chains. The cofactor is Mg(2+).

The enzyme catalyses 2 (2R)-3-phosphoglycerate + 2 H(+) = D-ribulose 1,5-bisphosphate + CO2 + H2O. It carries out the reaction D-ribulose 1,5-bisphosphate + O2 = 2-phosphoglycolate + (2R)-3-phosphoglycerate + 2 H(+). Its function is as follows. RuBisCO catalyzes two reactions: the carboxylation of D-ribulose 1,5-bisphosphate, the primary event in carbon dioxide fixation, as well as the oxidative fragmentation of the pentose substrate. Both reactions occur simultaneously and in competition at the same active site. The chain is Ribulose bisphosphate carboxylase large chain 2 from Bradyrhizobium sp. (strain ORS 278).